The chain runs to 308 residues: 4-hydroxyproline 2-epimerase (308 aa).

The active-site Proton acceptor is the C88. Residues 89 to 90 (GH), H208, and D232 each bind substrate. Catalysis depends on C236, which acts as the Proton donor. Substrate is bound at residue 237 to 238 (GT).

This sequence belongs to the proline racemase family.

It carries out the reaction trans-4-hydroxy-L-proline = cis-4-hydroxy-D-proline. In terms of biological role, catalyzes the reversible epimerization of cis-4-hydroxy-D-proline (c4DHyp) to trans-4-hydroxy-L-proline (t4LHyp). May be involved in a degradation pathway that allows P.putida strain KT2440 to grow on either epimer of 4-hydroxyproline, c4DHyp and t4LHyp, as the sole carbon and nitrogen source. Does not exhibit measureable racemase activity in vitro with any of the 19 natural chiral amino acid enantiomers. This Pseudomonas putida (strain ATCC 47054 / DSM 6125 / CFBP 8728 / NCIMB 11950 / KT2440) protein is 4-hydroxyproline 2-epimerase.